Reading from the N-terminus, the 411-residue chain is Arginine deiminase (411 aa).

The active-site Amidino-cysteine intermediate is the cysteine 401.

The protein belongs to the arginine deiminase family.

It is found in the cytoplasm. It carries out the reaction L-arginine + H2O = L-citrulline + NH4(+). Its pathway is amino-acid degradation; L-arginine degradation via ADI pathway; carbamoyl phosphate from L-arginine: step 1/2. The chain is Arginine deiminase from Streptococcus pyogenes serotype M2 (strain MGAS10270).